Here is a 207-residue protein sequence, read N- to C-terminus: 2,3-bisphosphoglycerate-dependent phosphoglycerate mutase (207 aa).

Residues 10 to 17, 23 to 24, Arg-62, 89 to 92, Lys-100, 116 to 117, and 160 to 161 contribute to the substrate site; these read RHGQSEWN, TG, ERDY, RR, and GN. His-11 acts as the Tele-phosphohistidine intermediate in catalysis. The active-site Proton donor/acceptor is Glu-89.

Belongs to the phosphoglycerate mutase family. BPG-dependent PGAM subfamily. Homodimer.

The catalysed reaction is (2R)-2-phosphoglycerate = (2R)-3-phosphoglycerate. The protein operates within carbohydrate degradation; glycolysis; pyruvate from D-glyceraldehyde 3-phosphate: step 3/5. Functionally, catalyzes the interconversion of 2-phosphoglycerate and 3-phosphoglycerate. The sequence is that of 2,3-bisphosphoglycerate-dependent phosphoglycerate mutase from Bradyrhizobium sp. (strain BTAi1 / ATCC BAA-1182).